Consider the following 40-residue polypeptide: Photosystem II reaction center protein J (40 aa).

Residues 8–28 (IPLWLIGTVAGILIIGLLGVF) form a helical membrane-spanning segment.

The protein belongs to the PsbJ family. PSII is composed of 1 copy each of membrane proteins PsbA, PsbB, PsbC, PsbD, PsbE, PsbF, PsbH, PsbI, PsbJ, PsbK, PsbL, PsbM, PsbT, PsbX, PsbY, PsbZ, Psb30/Ycf12, at least 3 peripheral proteins of the oxygen-evolving complex and a large number of cofactors. It forms dimeric complexes.

It is found in the plastid. The protein localises to the chloroplast thylakoid membrane. Its function is as follows. One of the components of the core complex of photosystem II (PSII). PSII is a light-driven water:plastoquinone oxidoreductase that uses light energy to abstract electrons from H(2)O, generating O(2) and a proton gradient subsequently used for ATP formation. It consists of a core antenna complex that captures photons, and an electron transfer chain that converts photonic excitation into a charge separation. The polypeptide is Photosystem II reaction center protein J (Nandina domestica (Heavenly bamboo)).